Here is a 320-residue protein sequence, read N- to C-terminus: Thymidylate synthase (320 aa).

Residues R27 and 182–183 each bind dUMP; that span reads RR. The Nucleophile role is filled by C202. DUMP contacts are provided by residues 222–225, N233, and 263–265; these read RSAD and HIY. (6R)-5,10-methylene-5,6,7,8-tetrahydrofolate is bound at residue D225. A (6R)-5,10-methylene-5,6,7,8-tetrahydrofolate-binding site is contributed by A319.

It belongs to the thymidylate synthase family. Bacterial-type ThyA subfamily. Homodimer.

Its subcellular location is the cytoplasm. The enzyme catalyses dUMP + (6R)-5,10-methylene-5,6,7,8-tetrahydrofolate = 7,8-dihydrofolate + dTMP. It participates in pyrimidine metabolism; dTTP biosynthesis. Its function is as follows. Catalyzes the reductive methylation of 2'-deoxyuridine-5'-monophosphate (dUMP) to 2'-deoxythymidine-5'-monophosphate (dTMP) while utilizing 5,10-methylenetetrahydrofolate (mTHF) as the methyl donor and reductant in the reaction, yielding dihydrofolate (DHF) as a by-product. This enzymatic reaction provides an intracellular de novo source of dTMP, an essential precursor for DNA biosynthesis. This Limosilactobacillus reuteri (strain DSM 20016) (Lactobacillus reuteri) protein is Thymidylate synthase.